The sequence spans 653 residues: ATP-dependent zinc metalloprotease FtsH 1 (653 aa).

Over 1-7 the chain is Cytoplasmic; it reads MSRFFKS. The helical transmembrane segment at 8–28 threads the bilayer; it reads AAFPILIVVVLAFFAQRLINP. Residues 29-105 are Extracellular-facing; sequence GDSGPRYDYS…FDIEGTKSNG (77 aa). The chain crosses the membrane as a helical span at residues 106–126; it reads WLSLLTYVLPFLIFIGFWIFL. Over 127–653 the chain is Cytoplasmic; that stretch reads MNQVQGGGSK…MHFPERPELA (527 aa). Position 198 to 205 (198 to 205) interacts with ATP; sequence GPPGTGKT. Histidine 420 provides a ligand contact to Zn(2+). Glutamate 421 is a catalytic residue. 2 residues coordinate Zn(2+): histidine 424 and aspartate 496. The disordered stretch occupies residues 603–653; the sequence is EEVFGAEASPPPDVPLPPATERGRDTPRPLPRPGLAGGAAEMHFPERPELA. Residues 611 to 620 show a composition bias toward pro residues; that stretch reads SPPPDVPLPP.

The protein in the central section; belongs to the AAA ATPase family. This sequence in the C-terminal section; belongs to the peptidase M41 family. As to quaternary structure, homohexamer. Zn(2+) serves as cofactor.

The protein localises to the cell membrane. Acts as a processive, ATP-dependent zinc metallopeptidase for both cytoplasmic and membrane proteins. Plays a role in the quality control of integral membrane proteins. The chain is ATP-dependent zinc metalloprotease FtsH 1 from Conexibacter woesei (strain DSM 14684 / CCUG 47730 / CIP 108061 / JCM 11494 / NBRC 100937 / ID131577).